Reading from the N-terminus, the 150-residue chain is Phosphoribosyl-AMP cyclohydrolase (150 aa).

D93 is a Mg(2+) binding site. Residue C94 coordinates Zn(2+). Residues D95 and D97 each coordinate Mg(2+). Residues C112 and C119 each coordinate Zn(2+).

It belongs to the PRA-CH family. Homodimer. Mg(2+) is required as a cofactor. Zn(2+) serves as cofactor.

The protein resides in the cytoplasm. It catalyses the reaction 1-(5-phospho-beta-D-ribosyl)-5'-AMP + H2O = 1-(5-phospho-beta-D-ribosyl)-5-[(5-phospho-beta-D-ribosylamino)methylideneamino]imidazole-4-carboxamide. It functions in the pathway amino-acid biosynthesis; L-histidine biosynthesis; L-histidine from 5-phospho-alpha-D-ribose 1-diphosphate: step 3/9. In terms of biological role, catalyzes the hydrolysis of the adenine ring of phosphoribosyl-AMP. This Rhizobium etli (strain CIAT 652) protein is Phosphoribosyl-AMP cyclohydrolase.